The sequence spans 261 residues: Bcl-2-binding component 3, isoforms 3/4 (261 aa).

A disordered region spans residues 27-261 (QICGPRERHG…ASAGDFLCTM (235 aa)). A compositionally biased stretch (low complexity) spans 40–50 (PGGQLPGARRG). Residues 53-63 (PRRPAPLPARP) are compositionally biased toward pro residues. Residues 64-73 (PGALGSVLRP) are compositionally biased toward low complexity. Basic residues-rich tracts occupy residues 74 to 87 (LRAR…RPHP) and 95 to 106 (RPHRPTRRHRRP). Positions 124–146 (PGRSSALALAGGAAPGVARAQRP) are enriched in low complexity. The span at 147 to 171 (GGSGGRSHPGGPGSPRGGGTVGPGD) shows a compositional bias: gly residues. Positions 172–197 (RGPAAADGGRPQRTVRAAETRGAAAA) are enriched in low complexity.

Does not interact with BCL2.

Functionally, does not affect cell growth. The sequence is that of Bcl-2-binding component 3, isoforms 3/4 (BBC3) from Homo sapiens (Human).